The primary structure comprises 569 residues: Falcipain-1 (569 aa).

Over 1–35 the chain is Cytoplasmic; the sequence is MVAIKEMKEFAFARPSLVETLNKKKKFLKKKEKRT. Residues 1-332 constitute a propeptide, activation peptide; it reads MVAIKEMKEF…KRNEKDIFSK (332 aa). A helical; Signal-anchor for type II membrane protein transmembrane segment spans residues 36-56; sequence FVLSIYAFITFIIFCIGILYF. Residues 57–569 lie on the Lumenal side of the membrane; the sequence is TNKSSAHNNN…IGEEVFYPIL (513 aa). Residues N58, N98, N121, and N127 are each glycosylated (N-linked (GlcNAc...) asparagine). Residues 97–118 are disordered; that stretch reads LNESSNEEDEEKYTLNSETYNN. Intrachain disulfides connect C354/C395, C388/C428, and C413/C433. The active site involves C357. N-linked (GlcNAc...) asparagine glycans are attached at residues N479 and N487. A disulfide bridge connects residues C482 and C558. Active-site residues include H488 and N533.

Belongs to the peptidase C1 family. Post-translationally, contains disulfide bonds.

The protein localises to the membrane. The protein resides in the cytoplasmic granule. Functionally, cysteine protease. In the mosquito midgut, required for parasite development. The chain is Falcipain-1 from Plasmodium falciparum (isolate 3D7).